Consider the following 300-residue polypeptide: Iron-dependent extradiol dioxygenase (300 aa).

2 VOC domains span residues 5-120 (SLGY…VFHG) and 142-270 (GMGH…FGCE). His-145 serves as a coordination point for Fe cation. His-200, His-215, Asp-250, and Tyr-256 together coordinate substrate. Position 215 (His-215) interacts with Fe cation. Residue Glu-266 coordinates Fe cation.

Belongs to the extradiol ring-cleavage dioxygenase family. Homodimer, but may form a homooctamer. Fe(2+) serves as cofactor.

It catalyses the reaction 3,4-dihydroxy-9,10-secoandrosta-1,3,5(10)-triene-9,17-dione + O2 = (1E,2Z)-3-hydroxy-5,9,17-trioxo-4,5:9,10-disecoandrosta-1(10),2-dien-4-oate + H(+). Its pathway is steroid metabolism; cholesterol metabolism. Catalyzes the meta-cleavage of 3,4-dihydroxy-9,10-seconandrost-1,3,5(10)-triene-9,17-dione (3,4-DHSA) to produce 4,5-9,10-diseco-3-hydroxy-5,9,17-trioxoandrosta-1(10),2-diene-4-oic acid (4,9-DSHA). The protein is Iron-dependent extradiol dioxygenase (hsaC) of Mycobacterium tuberculosis (strain CDC 1551 / Oshkosh).